A 352-amino-acid chain; its full sequence is RAD51-associated protein 1 (352 aa).

Residues 1–10 (MVRPVRHKKP) are compositionally biased toward basic residues. Disordered stretches follow at residues 1–78 (MVRP…TFSI) and 115–144 (TNVQ…HISN). 2 positions are modified to phosphoserine: Ser19 and Ser21. The interaction with DNA stretch occupies residues 30-49 (VPLNKKSRTAPKELKQDKPK). A compositionally biased stretch (basic and acidic residues) spans 39-72 (APKELKQDKPKPNLNNLRKEEIPVQEKTPKKRLP). Thr66 bears the Phosphothreonine mark. Phosphoserine occurs at positions 120 and 124. Over residues 132–144 (KIETMNKSPHISN) the composition is skewed to polar residues. The short motif at 154–159 (LDKITV) is the SIM motif element. The tract at residues 162–323 (DVGGVQGKRK…RSSSSPLVVV (162 aa)) is disordered. A compositionally biased stretch (acidic residues) spans 188-221 (SDGDSANDTEPDFAPGEDSEDDSDFCESEDNDED). The segment covering 229-247 (VKEIKKKEVKVKSPVEKKE) has biased composition (basic and acidic residues). An interaction with DNA region spans residues 243–304 (VEKKEKKSKS…PSAESKKPKW (62 aa)). Lys251 is covalently cross-linked (Glycyl lysine isopeptide (Lys-Gly) (interchain with G-Cter in ubiquitin; alternate)). Lys269 participates in a covalent cross-link: Glycyl lysine isopeptide (Lys-Gly) (interchain with G-Cter in SUMO). Over residues 270–284 (SESQSLPKKVSLSSD) the composition is skewed to polar residues. Phosphoserine is present on Ser280. The WVPP motif signature appears at 304 to 307 (WVPP). A compositionally biased stretch (low complexity) spans 306-323 (PPAASGGSRSSSSPLVVV). Positions 313–352 (SRSSSSPLVVVSVKSPNQSLRLGLSRLARVKPLHPNATST) are interaction with RAD51. The residue at position 327 (Ser327) is a Phosphoserine.

In terms of assembly, monomer; elongated monodisperse monomer. Interacts (via C-terminal region) with RAD51; the interaction is direct. Interacts (via SIM motif) with WDR48/UAF1; WDR48/UAF1 and RAD51AP1 cooperate together to stimulate RAD51-mediated homologous recombination (HR). Interacts (via WVPP motif) with DMC1; the interaction is direct. Interacts with PALB2. Interacts with RAD52. Does not interact with DMC1; lack of interaction is caused by the absence of the WVPP motif in this isoform. In terms of processing, sumoylation with SUMO2/3 by NSMCE2/MMS21 promotes stabilization, possibly by preventing ubiquitination. Sumoylation is required for alternative lengthening of telomeres (ALT) pathway. In terms of tissue distribution, highly expressed in testis and thymus. Lower levels in colon and small intestine. Little or no expression in spleen, prostate, ovary and peripheral blood leukocytes.

Its subcellular location is the chromosome. It localises to the nucleus. The protein resides in the telomere. In terms of biological role, structure-specific DNA-binding protein involved in DNA repair by promoting RAD51-mediated homologous recombination. Acts by stimulating D-Loop formation by RAD51: specifically enhances joint molecule formation through its structure-specific DNA interaction and its interaction with RAD51. Binds single-stranded DNA (ssDNA), double-stranded DNA (dsDNA) and secondary DNA structures, such as D-loop structures: has a strong preference for branched-DNA structures that are obligatory intermediates during joint molecule formation. Cooperates with WDR48/UAF1 to stimulate RAD51-mediated homologous recombination: both WDR48/UAF1 and RAD51AP1 have coordinated role in DNA-binding during homologous recombination and DNA repair. WDR48/UAF1 and RAD51AP1 also have a coordinated role in DNA-binding to promote USP1-mediated deubiquitination of FANCD2. Also involved in meiosis by promoting DMC1-mediated homologous meiotic recombination. Key mediator of alternative lengthening of telomeres (ALT) pathway, a homology-directed repair mechanism of telomere elongation that controls proliferation in aggressive cancers, by stimulating homologous recombination. May also bind RNA; additional evidences are however required to confirm RNA-binding in vivo. The polypeptide is RAD51-associated protein 1 (Homo sapiens (Human)).